We begin with the raw amino-acid sequence, 323 residues long: Coiled-coil domain-containing protein 160 (323 aa).

The stretch at 143 to 290 (SKLRLNLLNE…IKNELRTEKS (148 aa)) forms a coiled coil.

The protein belongs to the CCDC160 family.

This chain is Coiled-coil domain-containing protein 160 (CCDC160), found in Bos taurus (Bovine).